The sequence spans 356 residues: Butyrate kinase 2 (356 aa).

This sequence belongs to the acetokinase family. Homodimer.

Its subcellular location is the cytoplasm. The catalysed reaction is butanoate + ATP = butanoyl phosphate + ADP. It participates in lipid metabolism; butanoate metabolism. Catalyzes the conversion of butyryl-CoA through butyryl phosphate to butyrate. The protein is Butyrate kinase 2 (buk2) of Clostridium acetobutylicum (strain ATCC 824 / DSM 792 / JCM 1419 / IAM 19013 / LMG 5710 / NBRC 13948 / NRRL B-527 / VKM B-1787 / 2291 / W).